The primary structure comprises 262 residues: uncharacterized protein (262 aa).

The protein belongs to the AB hydrolase superfamily. AB hydrolase 2 family.

This is an uncharacterized protein from Mycosarcoma maydis (Corn smut fungus).